The chain runs to 240 residues: UDP-2,3-diacylglucosamine hydrolase (240 aa).

Mn(2+)-binding residues include Asp8, His10, Asp41, Asn79, and His114. Asn79–Arg80 contacts substrate. Positions 122, 160, 164, 167, and 195 each coordinate substrate. Mn(2+)-binding residues include His195 and His197.

The protein belongs to the LpxH family. Requires Mn(2+) as cofactor.

The protein localises to the cell inner membrane. It carries out the reaction UDP-2-N,3-O-bis[(3R)-3-hydroxytetradecanoyl]-alpha-D-glucosamine + H2O = 2-N,3-O-bis[(3R)-3-hydroxytetradecanoyl]-alpha-D-glucosaminyl 1-phosphate + UMP + 2 H(+). It functions in the pathway glycolipid biosynthesis; lipid IV(A) biosynthesis; lipid IV(A) from (3R)-3-hydroxytetradecanoyl-[acyl-carrier-protein] and UDP-N-acetyl-alpha-D-glucosamine: step 4/6. Functionally, hydrolyzes the pyrophosphate bond of UDP-2,3-diacylglucosamine to yield 2,3-diacylglucosamine 1-phosphate (lipid X) and UMP by catalyzing the attack of water at the alpha-P atom. Involved in the biosynthesis of lipid A, a phosphorylated glycolipid that anchors the lipopolysaccharide to the outer membrane of the cell. The chain is UDP-2,3-diacylglucosamine hydrolase from Escherichia coli O17:K52:H18 (strain UMN026 / ExPEC).